We begin with the raw amino-acid sequence, 238 residues long: 7-cyano-7-deazaguanine synthase (238 aa).

14-24 (FSGGQDSATCL) is a binding site for ATP. Positions 202, 217, 220, and 223 each coordinate Zn(2+).

This sequence belongs to the QueC family. Requires Zn(2+) as cofactor.

The catalysed reaction is 7-carboxy-7-deazaguanine + NH4(+) + ATP = 7-cyano-7-deazaguanine + ADP + phosphate + H2O + H(+). Its pathway is purine metabolism; 7-cyano-7-deazaguanine biosynthesis. Functionally, catalyzes the ATP-dependent conversion of 7-carboxy-7-deazaguanine (CDG) to 7-cyano-7-deazaguanine (preQ(0)). The polypeptide is 7-cyano-7-deazaguanine synthase (Nitrobacter winogradskyi (strain ATCC 25391 / DSM 10237 / CIP 104748 / NCIMB 11846 / Nb-255)).